The sequence spans 286 residues: Prohibitin-2, mitochondrial (286 aa).

The Mitochondrial matrix portion of the chain corresponds to M1–P13. A helical; Signal-anchor for type II membrane protein membrane pass occupies residues A14 to L32. Residues T33–K286 lie on the Mitochondrial intermembrane side of the membrane. The stretch at K186–A219 forms a coiled coil.

This sequence belongs to the prohibitin family. In terms of assembly, component of a prohibitin multimeric complex in mitochondrial membranes. Mostly expressed in proliferative tissues, including vasculature, shoot and root apical tissues.

Its subcellular location is the mitochondrion inner membrane. Prohibitin probably acts as a holdase/unfoldase for the stabilization of newly synthesized mitochondrial proteins. This is Prohibitin-2, mitochondrial (PHB2) from Arabidopsis thaliana (Mouse-ear cress).